A 191-amino-acid polypeptide reads, in one-letter code: uncharacterized protein (191 aa).

The tract at residues Asn52–Asn112 is disordered. Residues Gln57 to Val70 show a composition bias toward polar residues. Residues Asp71–Asn94 show a composition bias toward low complexity. Residues Gln138–Ser172 are a coiled coil.

This is an uncharacterized protein from Acanthamoeba polyphaga mimivirus (APMV).